The chain runs to 790 residues: AMP deaminase (790 aa).

A compositionally biased stretch (polar residues) spans M1 to F14. The segment at M1–D26 is disordered. The Zn(2+) site is built by H221 and H223. Residues H223 and K292 to Y297 contribute to the substrate site. H488 contributes to the Zn(2+) binding site. E491 is a substrate binding site. H510 serves as the catalytic Proton acceptor. D565 contributes to the Zn(2+) binding site. Residue D566 to Q569 coordinates substrate. Disordered stretches follow at residues N698–G726 and P739–K790. 2 stretches are compositionally biased toward low complexity: residues G706 to G726 and N750 to N781.

This sequence belongs to the metallo-dependent hydrolases superfamily. Adenosine and AMP deaminases family. In terms of assembly, homodimer. Requires Zn(2+) as cofactor.

It is found in the cytoplasm. The catalysed reaction is AMP + H2O + H(+) = IMP + NH4(+). The protein operates within purine metabolism; IMP biosynthesis via salvage pathway; IMP from AMP: step 1/1. With respect to regulation, activated by ATP, inhibited by GTP, EDTA and inorganic phosphate. In terms of biological role, catalyzes the conversion of adenosine monophosphate (AMP) to inosine monophosphate (IMP) and ammonia (NH4(+)). Participates in the regulation of the adenylated nucleotide pool and the interconversion to guanylated nucleotides during early morphodifferentiation. This Dictyostelium discoideum (Social amoeba) protein is AMP deaminase (amdA).